Consider the following 671-residue polypeptide: MSELEEDFAKILMLKEERIKELEKRLSEKEEEIQELKRKLHKCQSVLPVPSTHIGPRTTRAQGISAEPQTYRSFHDLRQAFRKFTKSERSKDLIKEAILDNDFMKNLELSQIQEIVDCMYPVEYGKDSCIIKEGDVGSLVYVMEDGKVEVTKEGVKLCTMGPGKVFGELAILYNCTRTATVKTLVNVKLWAIDRQCFQTIMMRTGLIKHTEYMEFLKSVPTFQSLPEEILSKLADVLEETHYENGEYIIRQGARGDTFFIISKGTVNVTREDSPSEDPVFLRTLGKGDWFGEKALQGEDVRTANVIAAEAVTCLVIDRDSFKHLIGGLDDVSNKAYEDAEAKAKYEAEAAFFANLKLSDFNIIDTLGVGGFGRVELVQLKSEESKTFAMKILKKRHIVDTRQQEHIRSEKQIMQGAHSDFIVRLYRTFKDSKYLYMLMEACLGGELWTILRDRGSFEDSTTRFYTACVVEAFAYLHSKGIIYRDLKPENLILDHRGYAKLVDFGFAKKIGFGKKTWTFCGTPEYVAPEIILNKGHDISADYWSLGILMYELLTGSPPFSGPDPMKTYNIILRGIDMIEFPKKIAKNAANLIKKLCRDNPSERLGNLKNGVKDIQKHKWFEGFNWEGLRKGTLTPPIIPSVASPTDTSNFDSFPEDNDEPPPDDNSGWDIDF.

Position 2 is an N-acetylserine (Ser-2). Residues 2-59 (SELEEDFAKILMLKEERIKELEKRLSEKEEEIQELKRKLHKCQSVLPVPSTHIGPRTT) adopt a coiled-coil conformation. The interval 2-102 (SELEEDFAKI…LIKEAILDND (101 aa)) is required for dimerization. The interval 9–44 (AKILMLKEERIKELEKRLSEKEEEIQELKRKLHKCQ) is leucine-zipper. Residues 50-75 (PSTHIGPRTTRAQGISAEPQTYRSFH) form an autoinhibitory domain region. Position 59 is a phosphothreonine; by autocatalysis (Thr-59). The tract at residues 103-220 (FMKNLELSQI…EYMEFLKSVP (118 aa)) is cGMP-binding, high affinity. 3',5'-cyclic AMP is bound by residues 167-170 (GELA) and 177-178 (RT). Residues 167-170 (GELA), 177-178 (RT), Arg-282, 291-294 (GEKA), 301-302 (RT), and Tyr-336 each bind 3',5'-cyclic GMP. Positions 221-341 (TFQSLPEEIL…SNKAYEDAEA (121 aa)) are cGMP-binding, low affinity. Residues 291 to 294 (GEKA), 301 to 302 (RT), and Tyr-336 contribute to the 3',5'-cyclic AMP site. The region spanning 360–619 (FNIIDTLGVG…VKDIQKHKWF (260 aa)) is the Protein kinase domain. ATP contacts are provided by residues 366–374 (LGVGGFGRV) and Lys-390. Asp-484 acts as the Proton acceptor in catalysis. The residue at position 515 (Thr-515) is a Phosphothreonine. An AGC-kinase C-terminal domain is found at 620 to 671 (EGFNWEGLRKGTLTPPIIPSVASPTDTSNFDSFPEDNDEPPPDDNSGWDIDF). The tract at residues 635–671 (PIIPSVASPTDTSNFDSFPEDNDEPPPDDNSGWDIDF) is disordered. Acidic residues predominate over residues 652-661 (FPEDNDEPPP).

The protein belongs to the protein kinase superfamily. AGC Ser/Thr protein kinase family. cGMP subfamily. In terms of assembly, isoform alpha: parallel homodimer or heterodimer and also heterotetramer. Interacts directly with PPP1R12A. Non-covalent dimer of dimer of PRKG1-PRKG1 and PPP1R12A-PPP1R12A. This interaction targets PRKG1 to stress fibers to mediate smooth muscle cell relaxation and vasodilation in responses to rises in cGMP. Isoform beta: antiparallel homodimer. Part of cGMP kinase signaling complex at least composed of ACTA2/alpha-actin, CNN1/calponin H1, PLN/phospholamban, PRKG1 and ITPR1. Interacts with IRAG1. Forms a stable complex with ITPR1, IRAG1, and isoform beta of PRKG1. Interacts with TRPC7 (via ankyrin repeat domain). Isoform alpha interacts with RGS2. Interacts with GTF2I. In terms of processing, autophosphorylation increases kinase activity. 65 kDa monomer is produced by proteolytic cleavage. As to expression, primarily expressed in lung and placenta.

The protein localises to the cytoplasm. It catalyses the reaction L-seryl-[protein] + ATP = O-phospho-L-seryl-[protein] + ADP + H(+). The catalysed reaction is L-threonyl-[protein] + ATP = O-phospho-L-threonyl-[protein] + ADP + H(+). With respect to regulation, in the absence of cGMP, PRKG1 activity is suppressed by autoinhibitory contacts. Serine/threonine protein kinase that acts as a key mediator of the nitric oxide (NO)/cGMP signaling pathway. GMP binding activates PRKG1, which phosphorylates serines and threonines on many cellular proteins. Numerous protein targets for PRKG1 phosphorylation are implicated in modulating cellular calcium, but the contribution of each of these targets may vary substantially among cell types. Proteins that are phosphorylated by PRKG1 regulate platelet activation and adhesion, smooth muscle contraction, cardiac function, gene expression, feedback of the NO-signaling pathway, and other processes involved in several aspects of the CNS like axon guidance, hippocampal and cerebellar learning, circadian rhythm and nociception. Smooth muscle relaxation is mediated through lowering of intracellular free calcium, by desensitization of contractile proteins to calcium, and by decrease in the contractile state of smooth muscle or in platelet activation. Regulates intracellular calcium levels via several pathways: phosphorylates IRAG1 and inhibits IP3-induced Ca(2+) release from intracellular stores, phosphorylation of KCNMA1 (BKCa) channels decreases intracellular Ca(2+) levels, which leads to increased opening of this channel. PRKG1 phosphorylates the canonical transient receptor potential channel (TRPC) family which inactivates the associated inward calcium current. Another mode of action of NO/cGMP/PKGI signaling involves PKGI-mediated inactivation of the Ras homolog gene family member A (RhoA). Phosphorylation of RHOA by PRKG1 blocks the action of this protein in myriad processes: regulation of RHOA translocation; decreasing contraction; controlling vesicle trafficking, reduction of myosin light chain phosphorylation resulting in vasorelaxation. Activation of PRKG1 by NO signaling also alters gene expression in a number of tissues. In smooth muscle cells, increased cGMP and PRKG1 activity influence expression of smooth muscle-specific contractile proteins, levels of proteins in the NO/cGMP signaling pathway, down-regulation of the matrix proteins osteopontin and thrombospondin-1 to limit smooth muscle cell migration and phenotype. Regulates vasodilator-stimulated phosphoprotein (VASP) functions in platelets and smooth muscle. The protein is cGMP-dependent protein kinase 1 (PRKG1) of Homo sapiens (Human).